A 156-amino-acid polypeptide reads, in one-letter code: Small ribosomal subunit protein uS10m (156 aa).

Belongs to the universal ribosomal protein uS10 family.

The protein resides in the mitochondrion. Functionally, ribosomal protein required for normal mitochondrial function and normal larval development. Thought to have a role in insulin/IGF signaling. In Caenorhabditis elegans, this protein is Small ribosomal subunit protein uS10m (mrps-10).